A 189-amino-acid chain; its full sequence is Lipid A acyltransferase PagP (189 aa).

The signal sequence occupies residues 1–23 (MRLKLILYFLILSCYLGIGSARA). Catalysis depends on residues H61, D104, and S105.

It belongs to the lipid A palmitoyltransferase family. As to quaternary structure, homodimer.

It is found in the cell outer membrane. It carries out the reaction a lipid A + a 1,2-diacyl-sn-glycero-3-phosphocholine = a hepta-acyl lipid A + a 2-acyl-sn-glycero-3-phosphocholine. It catalyses the reaction a lipid IVA + a 1,2-diacyl-sn-glycero-3-phosphocholine = a lipid IVB + a 2-acyl-sn-glycero-3-phosphocholine. The catalysed reaction is a lipid IIA + a 1,2-diacyl-sn-glycero-3-phosphocholine = a lipid IIB + a 2-acyl-sn-glycero-3-phosphocholine. Functionally, transfers a fatty acid residue from the sn-1 position of a phospholipid to the N-linked hydroxyfatty acid chain on the proximal unit of lipid A or its precursors. The protein is Lipid A acyltransferase PagP of Erwinia tasmaniensis (strain DSM 17950 / CFBP 7177 / CIP 109463 / NCPPB 4357 / Et1/99).